Here is a 128-residue protein sequence, read N- to C-terminus: Large ribosomal subunit protein bL17 (128 aa).

It belongs to the bacterial ribosomal protein bL17 family. As to quaternary structure, part of the 50S ribosomal subunit. Contacts protein L32.

This is Large ribosomal subunit protein bL17 from Streptococcus pneumoniae serotype 2 (strain D39 / NCTC 7466).